The sequence spans 843 residues: N-acetyltransferase ESCO1 (843 aa).

Positions 1 to 78 are disordered; sequence MSIQEKSKEN…SASCSADKTA (78 aa). Residues 18–28 are compositionally biased toward acidic residues; the sequence is SEDENLEEEVE. Over residues 66–78 the composition is skewed to polar residues; it reads STRSASCSADKTA. Serine 202 bears the Phosphoserine mark. The tract at residues 262-300 is disordered; it reads NELRKSAHTQVSTSTKRPQIPLPLVPEHSDDQELEQAGK. The segment covering 269 to 278 has biased composition (polar residues); sequence HTQVSTSTKR. Lysine 335 is covalently cross-linked (Glycyl lysine isopeptide (Lys-Gly) (interchain with G-Cter in SUMO2)). A Phosphoserine modification is found at serine 415. Positions 546-584 are disordered; that stretch reads DRTFPGSAPNQQHSVLSDEASINRKNRDVPPNHSQLKHD. Residues 566–584 show a composition bias toward basic and acidic residues; that stretch reads SINRKNRDVPPNHSQLKHD. The segment at 620–644 adopts a CCHH-type zinc-finger fold; that stretch reads VSCNICGMLYTASNPEDETQHLLFH. Residues 775-777, 783-788, and 815-817 each bind acetyl-CoA; these read IWV, RKKIAS, and TPD.

It belongs to the acetyltransferase family. ECO subfamily. The subunit structure is controversial. Monomer. Homodimer. In terms of processing, phosphorylated during mitosis.

It is found in the nucleus. The protein resides in the chromosome. The catalysed reaction is L-lysyl-[protein] + acetyl-CoA = N(6)-acetyl-L-lysyl-[protein] + CoA + H(+). In terms of biological role, acetyltransferase required for the establishment of sister chromatid cohesion. Couples the processes of cohesion and DNA replication to ensure that only sister chromatids become paired together. In contrast to the structural cohesins, the deposition and establishment factors are required only during S phase. Acts by mediating the acetylation of cohesin component SMC3. This is N-acetyltransferase ESCO1 (Esco1) from Mus musculus (Mouse).